Consider the following 469-residue polypeptide: Adenosylhomocysteinase (469 aa).

The substrate site is built by threonine 63, aspartate 139, and glutamate 164. 165–167 (TTT) is a binding site for NAD(+). Residues lysine 194 and aspartate 198 each contribute to the substrate site. NAD(+) is bound by residues asparagine 199, 228 to 233 (GYGDVG), glutamate 251, asparagine 300, 321 to 323 (IGH), and asparagine 375.

The protein belongs to the adenosylhomocysteinase family. It depends on NAD(+) as a cofactor.

Its subcellular location is the cytoplasm. It carries out the reaction S-adenosyl-L-homocysteine + H2O = L-homocysteine + adenosine. It participates in amino-acid biosynthesis; L-homocysteine biosynthesis; L-homocysteine from S-adenosyl-L-homocysteine: step 1/1. Functionally, may play a key role in the regulation of the intracellular concentration of adenosylhomocysteine. The polypeptide is Adenosylhomocysteinase (Pseudomonas putida (strain GB-1)).